A 189-amino-acid chain; its full sequence is Large ribosomal subunit protein uL5 (189 aa).

The protein belongs to the universal ribosomal protein uL5 family. In terms of assembly, part of the 50S ribosomal subunit; part of the 5S rRNA/L5/L18/L25 subcomplex. Contacts the 5S rRNA and the P site tRNA. Forms a bridge to the 30S subunit in the 70S ribosome.

Its function is as follows. This is one of the proteins that bind and probably mediate the attachment of the 5S RNA into the large ribosomal subunit, where it forms part of the central protuberance. In the 70S ribosome it contacts protein S13 of the 30S subunit (bridge B1b), connecting the 2 subunits; this bridge is implicated in subunit movement. Contacts the P site tRNA; the 5S rRNA and some of its associated proteins might help stabilize positioning of ribosome-bound tRNAs. The chain is Large ribosomal subunit protein uL5 from Parafrankia sp. (strain EAN1pec).